Consider the following 38-residue polypeptide: Photosystem II reaction center protein L (38 aa).

A helical transmembrane segment spans residues 17 to 37 (SLYWGLLLIXVLAVLFSNYFF).

It belongs to the PsbL family. In terms of assembly, PSII is composed of 1 copy each of membrane proteins PsbA, PsbB, PsbC, PsbD, PsbE, PsbF, PsbH, PsbI, PsbJ, PsbK, PsbL, PsbM, PsbT, PsbX, PsbY, PsbZ, Psb30/Ycf12, at least 3 peripheral proteins of the oxygen-evolving complex and a large number of cofactors. It forms dimeric complexes.

Its subcellular location is the plastid. The protein localises to the chloroplast thylakoid membrane. Its function is as follows. One of the components of the core complex of photosystem II (PSII). PSII is a light-driven water:plastoquinone oxidoreductase that uses light energy to abstract electrons from H(2)O, generating O(2) and a proton gradient subsequently used for ATP formation. It consists of a core antenna complex that captures photons, and an electron transfer chain that converts photonic excitation into a charge separation. This subunit is found at the monomer-monomer interface and is required for correct PSII assembly and/or dimerization. In Allium textile (Textile onion), this protein is Photosystem II reaction center protein L.